We begin with the raw amino-acid sequence, 352 residues long: Lipid storage droplets surface-binding protein 2 (352 aa).

Disordered stretches follow at residues 1–28 and 298–352; these read MASA…DQPK and NVEQ…VSSQ. The span at 298–309 shows a compositional bias: polar residues; sequence NVEQSGGSSSDA. Residues 315–329 show a composition bias toward low complexity; it reads TTTSTTTTTTTSSTS.

This sequence belongs to the perilipin family. Ubiquitous expression in early embryos. At stage 5 expression is restricted to the pole cells. At stage 11 expression is seen in the amnioserosa, refined to the fat body and midgut by stage 14. Also seen in the hindgut by the end of embryogenesis. Expression is seen in larval fat body (at protein level).

It is found in the cytoplasm. It localises to the lipid droplet. Essential for embryogenesis. Required for normal deposition of neutral lipids in the oocyte. The sequence is that of Lipid storage droplets surface-binding protein 2 from Drosophila melanogaster (Fruit fly).